Reading from the N-terminus, the 128-residue chain is Fluoride-specific ion channel FluC 2 (128 aa).

The next 4 membrane-spanning stretches (helical) occupy residues 13–35, 40–59, 71–93, and 97–119; these read ALVA…AIAG, LAAN…EAAA, LLGT…TAGL, and WMAA…GRAI.

It belongs to the fluoride channel Fluc/FEX (TC 1.A.43) family.

The protein resides in the cell membrane. The catalysed reaction is fluoride(in) = fluoride(out). Fluoride-specific ion channel. Important for reducing fluoride concentration in the cell, thus reducing its toxicity. This Halobacterium salinarum (strain ATCC 700922 / JCM 11081 / NRC-1) (Halobacterium halobium) protein is Fluoride-specific ion channel FluC 2.